Consider the following 1622-residue polypeptide: Transient receptor potential cation channel subfamily M member 1 (1622 aa).

5 disordered regions span residues 1–25, 64–95, 450–490, 618–641, and 822–856; these read MGSMRKMSSSFKRGSIKSSTSGSQK, PPLPSGAPSTTGEDTKQADTQSGKWSVSKHTQ, LAPP…EVEE, LGMEDDEPPAKGKKKKKKKKEEEI, and SKENEDGKEKEEENVDANADAGSRKGDEENEHKKQ. Topologically, residues 1 to 875 are cytoplasmic; that stretch reads MGSMRKMSSS…CEFYNAPIVK (875 aa). Residues 8–25 show a composition bias toward low complexity; the sequence is SSSFKRGSIKSSTSGSQK. Residues 70 to 95 are compositionally biased toward polar residues; the sequence is APSTTGEDTKQADTQSGKWSVSKHTQ. The span at 472 to 483 shows a compositional bias: basic residues; the sequence is GRGKGKGKKKGK. Basic and acidic residues-rich tracts occupy residues 823-832 and 843-853; these read KENEDGKEKE and GSRKGDEENEH. Residues 876–896 traverse the membrane as a helical segment; the sequence is FWFYTISYLGYLLLFNYVILV. The Extracellular portion of the chain corresponds to 897-942; the sequence is RMDGWPSPQEWIVISYIVSLALEKIREILMSEPGKLSQKIKVWLQE. Residues 943 to 963 form a helical membrane-spanning segment; the sequence is YWNITDLVAISMFMVGAILRL. Over 964 to 973 the chain is Cytoplasmic; it reads QSQPYMGYGR. The helical transmembrane segment at 974–994 threads the bilayer; it reads VIYCVDIILWYIRVLDIFGVN. The Extracellular segment spans residues 995 to 1006; it reads KYLGPYVMMIGK. The chain crosses the membrane as a helical span at residues 1007-1027; it reads MMIDMLYFVVIMLVVLMSFGV. At 1028–1099 the chain is on the cytoplasmic side; it reads ARQAILHPEE…CIPGAWLTPA (72 aa). A helical membrane pass occupies residues 1100–1120; it reads LMACYLLVANILLVNLLIAVF. N-linked (GlcNAc...) asparagine glycosylation is present at N1121. Topologically, residues 1121 to 1150 are extracellular; the sequence is NNTFFEVKSISNQVWKFQRYQLIMTFHDRP. Residues 1151-1171 form a helical membrane-spanning segment; the sequence is VLPPPMIILSHIYIIIMRLSG. Residues 1172–1622 are Cytoplasmic-facing; sequence RCRKKREGDQ…QEKRSAETEC (451 aa). Residues 1224–1252 are a coiled coil; it reads DERIRVTSERVENMSMRLEEINERENFMK. Disordered stretches follow at residues 1354–1383, 1389–1408, and 1567–1622; these read EDAKSHLDQPSNLHHTPGPSPPATPGRSRL, LSTELRPGSDPGISAGEFDP, and CLRS…ETEC. Basic and acidic residues predominate over residues 1613–1622; sequence QEKRSAETEC.

This sequence belongs to the transient receptor (TC 1.A.4) family. LTrpC subfamily. TRPM1 sub-subfamily. As to quaternary structure, homodimer. Interacts with TRPM3; the interaction results in the formation of a heteromultimeric cation channel complex that are functionally different from the homomeric channels. Interacts with GPR179. Associates with both guanine nucleotide-binding proteins G(o) and beta-gamma G protein dimer; implicated in directly regulating TRPM1 channel open-state. As to expression, expressed in the retina where it localizes on dendritic tips of ON bipolar cells. Specifically, it is expressed in retinal bipolar cells (BPCs) of the ON subtype. Not detected in brain, lung, liver, heart, kidney, spleen or small intestine. Also expressed at high levels in poorly metastatic variants of B16 melanoma and at much reduced levels in highly metastatic variants of B16 melanoma.

The protein resides in the cell membrane. It is found in the endoplasmic reticulum membrane. It localises to the cell projection. Its subcellular location is the axon. It carries out the reaction Ca(2+)(in) = Ca(2+)(out). It catalyses the reaction Mg(2+)(in) = Mg(2+)(out). The enzyme catalyses Mn(2+)(in) = Mn(2+)(out). The catalysed reaction is Ni(2+)(in) = Ni(2+)(out). Its activity is regulated as follows. Inhibited by extracellular zinc ions. Inhibited by intracellular Mg(2+). Activated by the neuroactive steroid pregnenolone sulfate. Negatively regulated by activation of GRM6 receptors in the ON-bipolar cells. Constitutively open nonselective divalent cation-conducting channels which mediate the influx of Ca(2+), Mg(2+), Mn(2+), Ba(2+), and Ni(2+) into the cytoplasm, leading to membrane depolarization. Impermeable to zinc ions. In addition, forms heteromultimeric ion channels with TRPM3 which are permeable for calcium and zinc ions. Plays an essential role for the depolarizing photoresponse of retinal ON bipolar cells. In the dark, tonic release of glutamate activates the G-protein coupled receptor for glutamate (GRM6), its activation induces the release of G(o) and the beta-gamma G protein dimer. Both subunits can interact and inactivate the TRPM1 channel. A light onset, induces decrease in glutamate release and deactivation of GRM6 leading to channel opening and membrane depolarization. May play a role in metastasis suppression. This Mus musculus (Mouse) protein is Transient receptor potential cation channel subfamily M member 1.